A 465-amino-acid chain; its full sequence is Ribulose bisphosphate carboxylase large chain (465 aa).

K4 carries the post-translational modification N6,N6,N6-trimethyllysine. 2 residues coordinate substrate: N113 and T163. Catalysis depends on K165, which acts as the Proton acceptor. K167 contributes to the substrate binding site. Mg(2+) is bound by residues K191, D193, and E194. K191 bears the N6-carboxylysine mark. Catalysis depends on H284, which acts as the Proton acceptor. 3 residues coordinate substrate: R285, H317, and S369.

It belongs to the RuBisCO large chain family. Type I subfamily. In terms of assembly, heterohexadecamer of 8 large chains and 8 small chains; disulfide-linked. The disulfide link is formed within the large subunit homodimers. The cofactor is Mg(2+). In terms of processing, the disulfide bond which can form in the large chain dimeric partners within the hexadecamer appears to be associated with oxidative stress and protein turnover.

Its subcellular location is the plastid. It is found in the chloroplast. It catalyses the reaction 2 (2R)-3-phosphoglycerate + 2 H(+) = D-ribulose 1,5-bisphosphate + CO2 + H2O. The enzyme catalyses D-ribulose 1,5-bisphosphate + O2 = 2-phosphoglycolate + (2R)-3-phosphoglycerate + 2 H(+). RuBisCO catalyzes two reactions: the carboxylation of D-ribulose 1,5-bisphosphate, the primary event in carbon dioxide fixation, as well as the oxidative fragmentation of the pentose substrate in the photorespiration process. Both reactions occur simultaneously and in competition at the same active site. This chain is Ribulose bisphosphate carboxylase large chain, found in Cornus canadensis (Bunchberry dogwood).